The following is a 427-amino-acid chain: Glutamate-1-semialdehyde 2,1-aminomutase (427 aa).

N6-(pyridoxal phosphate)lysine is present on K264.

The protein belongs to the class-III pyridoxal-phosphate-dependent aminotransferase family. HemL subfamily. In terms of assembly, homodimer. It depends on pyridoxal 5'-phosphate as a cofactor.

It is found in the cytoplasm. It carries out the reaction (S)-4-amino-5-oxopentanoate = 5-aminolevulinate. It functions in the pathway porphyrin-containing compound metabolism; protoporphyrin-IX biosynthesis; 5-aminolevulinate from L-glutamyl-tRNA(Glu): step 2/2. The sequence is that of Glutamate-1-semialdehyde 2,1-aminomutase from Clostridium botulinum (strain Eklund 17B / Type B).